The following is a 343-amino-acid chain: 4-hydroxyproline 2-epimerase 1 (343 aa).

The Proton acceptor role is filled by serine 90. Substrate is bound by residues 91 to 92 (GS), aspartate 251, and 256 to 257 (GT).

It belongs to the proline racemase family.

It carries out the reaction trans-4-hydroxy-L-proline = cis-4-hydroxy-D-proline. Functionally, catalyzes the epimerization of trans-4-hydroxy-L-proline (t4LHyp) to cis-4-hydroxy-D-proline (c4DHyp) in vitro, albeit with low efficiency. The physiological substrate may be different. Displays no proline racemase activity. The protein is 4-hydroxyproline 2-epimerase 1 of Brucella anthropi (strain ATCC 49188 / DSM 6882 / CCUG 24695 / JCM 21032 / LMG 3331 / NBRC 15819 / NCTC 12168 / Alc 37) (Ochrobactrum anthropi).